A 166-amino-acid chain; its full sequence is Peptide methionine sulfoxide reductase MsrA (166 aa).

Cysteine 11 is an active-site residue.

It belongs to the MsrA Met sulfoxide reductase family.

The catalysed reaction is L-methionyl-[protein] + [thioredoxin]-disulfide + H2O = L-methionyl-(S)-S-oxide-[protein] + [thioredoxin]-dithiol. The enzyme catalyses [thioredoxin]-disulfide + L-methionine + H2O = L-methionine (S)-S-oxide + [thioredoxin]-dithiol. Its function is as follows. Has an important function as a repair enzyme for proteins that have been inactivated by oxidation. Catalyzes the reversible oxidation-reduction of methionine sulfoxide in proteins to methionine. The chain is Peptide methionine sulfoxide reductase MsrA from Lachnoclostridium phytofermentans (strain ATCC 700394 / DSM 18823 / ISDg) (Clostridium phytofermentans).